Reading from the N-terminus, the 162-residue chain is Transcription antitermination protein NusB (162 aa).

It belongs to the NusB family.

Involved in transcription antitermination. Required for transcription of ribosomal RNA (rRNA) genes. Binds specifically to the boxA antiterminator sequence of the ribosomal RNA (rrn) operons. The protein is Transcription antitermination protein NusB of Xanthomonas euvesicatoria pv. vesicatoria (strain 85-10) (Xanthomonas campestris pv. vesicatoria).